Consider the following 202-residue polypeptide: Outer-membrane lipoprotein carrier protein (202 aa).

The N-terminal stretch at 1–18 is a signal peptide; the sequence is MNKLFLILLLIFSHEVFS.

This sequence belongs to the LolA family. In terms of assembly, monomer.

It is found in the periplasm. Functionally, participates in the translocation of lipoproteins from the inner membrane to the outer membrane. Only forms a complex with a lipoprotein if the residue after the N-terminal Cys is not an aspartate (The Asp acts as a targeting signal to indicate that the lipoprotein should stay in the inner membrane). This is Outer-membrane lipoprotein carrier protein from Legionella pneumophila (strain Corby).